Consider the following 169-residue polypeptide: uncharacterized protein (169 aa).

Helical transmembrane passes span Ala-25–Phe-45, Phe-57–Phe-77, and Leu-91–Val-111.

Belongs to the major facilitator superfamily. Allantoate permease family.

The protein localises to the membrane. This is an uncharacterized protein from Saccharomyces cerevisiae (strain ATCC 204508 / S288c) (Baker's yeast).